Here is a 273-residue protein sequence, read N- to C-terminus: Shikimate dehydrogenase (NADP(+)) (273 aa).

Shikimate-binding positions include 15–17 (SQS) and threonine 62. Lysine 66 acts as the Proton acceptor in catalysis. Glutamate 78 is an NADP(+) binding site. Positions 87 and 102 each coordinate shikimate. Residues 127–131 (GAGGA), 151–156 (NRTVIK), and methionine 215 contribute to the NADP(+) site. Tyrosine 217 is a shikimate binding site. Glycine 239 is a binding site for NADP(+).

Belongs to the shikimate dehydrogenase family. In terms of assembly, homodimer.

It catalyses the reaction shikimate + NADP(+) = 3-dehydroshikimate + NADPH + H(+). Its pathway is metabolic intermediate biosynthesis; chorismate biosynthesis; chorismate from D-erythrose 4-phosphate and phosphoenolpyruvate: step 4/7. In terms of biological role, involved in the biosynthesis of the chorismate, which leads to the biosynthesis of aromatic amino acids. Catalyzes the reversible NADPH linked reduction of 3-dehydroshikimate (DHSA) to yield shikimate (SA). This is Shikimate dehydrogenase (NADP(+)) from Chromobacterium violaceum (strain ATCC 12472 / DSM 30191 / JCM 1249 / CCUG 213 / NBRC 12614 / NCIMB 9131 / NCTC 9757 / MK).